Here is a 325-residue protein sequence, read N- to C-terminus: uncharacterized protein (325 aa).

Residues 108–141 (PHRTQGISSTSSKSSKGGKKTPVRSTPKEIKKAT) are disordered.

This is an uncharacterized protein from Homo sapiens (Human).